Consider the following 175-residue polypeptide: Ribosome maturation factor RimM (175 aa).

The PRC barrel domain occupies 100–173 (EGEYYFHEII…TIIIRPMEGL (74 aa)).

This sequence belongs to the RimM family. Binds ribosomal protein uS19.

Its subcellular location is the cytoplasm. An accessory protein needed during the final step in the assembly of 30S ribosomal subunit, possibly for assembly of the head region. Essential for efficient processing of 16S rRNA. May be needed both before and after RbfA during the maturation of 16S rRNA. It has affinity for free ribosomal 30S subunits but not for 70S ribosomes. The chain is Ribosome maturation factor RimM from Geobacillus kaustophilus (strain HTA426).